The sequence spans 181 residues: NAD(P)H-quinone oxidoreductase subunit 6, chloroplastic (181 aa).

The next 5 membrane-spanning stretches (helical) occupy residues 10–30 (TLLFVVLEFAILVGALGVVLL), 33–53 (VIYSALLLGFVFICVALLYLL), 62–82 (AQVLIYVGAVNVLIVFAIMLV), 98–118 (IISAFTFIALFVLLTIMIFTT), and 153–173 (LFPFELLSLLLLVALVGAITI).

This sequence belongs to the complex I subunit 6 family. NDH is composed of at least 16 different subunits, 5 of which are encoded in the nucleus.

The protein localises to the plastid. It is found in the chloroplast thylakoid membrane. It carries out the reaction a plastoquinone + NADH + (n+1) H(+)(in) = a plastoquinol + NAD(+) + n H(+)(out). It catalyses the reaction a plastoquinone + NADPH + (n+1) H(+)(in) = a plastoquinol + NADP(+) + n H(+)(out). NDH shuttles electrons from NAD(P)H:plastoquinone, via FMN and iron-sulfur (Fe-S) centers, to quinones in the photosynthetic chain and possibly in a chloroplast respiratory chain. The immediate electron acceptor for the enzyme in this species is believed to be plastoquinone. Couples the redox reaction to proton translocation, and thus conserves the redox energy in a proton gradient. The polypeptide is NAD(P)H-quinone oxidoreductase subunit 6, chloroplastic (ndhG) (Zygnema circumcarinatum (Green alga)).